The primary structure comprises 118 residues: Actin depolymerizing factor ADF (118 aa).

Residues 4–118 (GMGVDENCVA…HEMGDLAPLA (115 aa)) form the ADF-H domain.

It belongs to the actin-binding proteins ADF family. In terms of assembly, interacts with ACT1 (G-actin); the interaction results in inhibition of actin polymerization. Interacts with DPA; the interaction enhances ADF activity in disassembly of filamentous actin and inhibition of actin polymerization.

It localises to the cytoplasm. Functionally, inhibits actin polymerization. Promotes actin depolymerization. Strongly sequesters actin monomers (G-actin). Weakly severs actin filaments (F-actin). The polypeptide is Actin depolymerizing factor ADF (Toxoplasma gondii).